A 396-amino-acid chain; its full sequence is MSKKVTIAYGGSNGNKFDDGVYEGTYDGVRKLIVGEDFHGIVYLKIQYVKNGDVVVKEHGRARGTHITETEFEVKCPDEYITSIWGTCRNDHHRYKSTGGRTFEQLTAADKYDINLAAKMGTPMYWNTVSELQFKTSHGRTSEQFRMPGTGGSNGVSWDDGAYDRLSKLCVGEDAHCVSSVEFHYVKGNDRITHCHGKDSKEHDKDGFISSLTFKTSMNRSSEKFGKPVGTKFQLEAKGFDKIVGFRGRSSVNRINALGANFAVVVVPPVKKLNAKGGVLGNEWDDGIHDDARMITFKLYFNKEYITSVEGHYGKRLAAPNASASAMSSFFTGYMTMLKFNTNRTTYQVLSHSPEYTYEGTSFKLEEKDHKIVGFYGKTEVSLNQIGVYVKPIANA.

Jacalin-type lectin domains follow at residues 3–138, 144–264, and 270–392; these read KKVT…KTSH, QFRM…NFAV, and VKKL…YVKP.

This sequence belongs to the jacalin lectin family.

This Arabidopsis thaliana (Mouse-ear cress) protein is Jacalin-related lectin 45 (JAL45).